A 1015-amino-acid chain; its full sequence is Probable beta-galactosidase B (1015 aa).

Residues 1–20 (MAHIYRLLLLLLSNLWFSTA) form the signal peptide. Asn23 carries an N-linked (GlcNAc...) asparagine glycan. A substrate-binding site is contributed by Tyr90. N-linked (GlcNAc...) asparagine glycans are attached at residues Asn99 and Asn100. Residues Asn135, Ala136, and Glu137 each coordinate substrate. Asn172 is a glycosylation site (N-linked (GlcNAc...) asparagine). Substrate is bound at residue Asn195. Glu196 acts as the Proton donor in catalysis. N-linked (GlcNAc...) asparagine glycosylation occurs at Asn211. Tyr265 contributes to the substrate binding site. The cysteines at positions 271 and 324 are disulfide-linked. The active-site Nucleophile is Glu308. Residue Tyr373 coordinates substrate. N-linked (GlcNAc...) asparagine glycosylation is found at Asn411, Asn456, Asn554, Asn679, Asn735, Asn775, and Asn821.

Belongs to the glycosyl hydrolase 35 family.

The protein resides in the secreted. The enzyme catalyses Hydrolysis of terminal non-reducing beta-D-galactose residues in beta-D-galactosides.. Cleaves beta-linked terminal galactosyl residues from gangliosides, glycoproteins, and glycosaminoglycans. The chain is Probable beta-galactosidase B (lacB) from Aspergillus fumigatus (strain CBS 144.89 / FGSC A1163 / CEA10) (Neosartorya fumigata).